The primary structure comprises 369 residues: Peptide chain release factor 2 (369 aa).

The residue at position 251 (Gln-251) is an N5-methylglutamine.

This sequence belongs to the prokaryotic/mitochondrial release factor family. In terms of processing, methylated by PrmC. Methylation increases the termination efficiency of RF2.

Its subcellular location is the cytoplasm. Functionally, peptide chain release factor 2 directs the termination of translation in response to the peptide chain termination codons UGA and UAA. This Chlamydia pneumoniae (Chlamydophila pneumoniae) protein is Peptide chain release factor 2 (prfB).